The sequence spans 504 residues: Heat shock 70 kDa protein 14 (504 aa).

It belongs to the heat shock protein 70 family. As to quaternary structure, component of ribosome-associated complex (RAC).

The protein localises to the cytoplasm. Its subcellular location is the cytosol. Its function is as follows. Component of the ribosome-associated complex (RAC), a complex involved in folding or maintaining nascent polypeptides in a folding-competent state. The polypeptide is Heat shock 70 kDa protein 14 (hspa14) (Danio rerio (Zebrafish)).